Here is a 704-residue protein sequence, read N- to C-terminus: Metabotropic glutamate receptor-like protein K (704 aa).

The first 21 residues, 1-21 (MIKLILSIILIICFIINSIES), serve as a signal peptide directing secretion. Over 22–383 (FKMITLTTGP…SKVEFQRSIQ (362 aa)) the chain is Extracellular. N-linked (GlcNAc...) asparagine glycosylation is found at Asn-66, Asn-104, Asn-256, Asn-286, Asn-308, Asn-337, Asn-343, and Asn-368. The chain crosses the membrane as a helical span at residues 384-404 (IGFSIVSGLLIGFVILMMIGI). The Cytoplasmic segment spans residues 405 to 419 (VKYQDTPSIRSASPS). A helical transmembrane segment spans residues 420–440 (FLNLTLLGGVIIFIGIIVWVA). Residues 441-455 (PISTHQCNARFWLVT) are Extracellular-facing. Residues 456–476 (IGFSTLIGSLVVKNIRIWLIF) traverse the membrane as a helical segment. Over 477–492 (DNPELKIRTITNNQLY) the chain is Cytoplasmic. The helical transmembrane segment at 493–513 (PWVGLCLVINIVLMSIITTVG) threads the bilayer. At 514–541 (DLKAIEAQGIDSLGKFEYMTICKMNYTG) the chain is on the extracellular side. Asn-538 carries an N-linked (GlcNAc...) asparagine glycan. Residues 542 to 562 (AATLYSILAYFGTLLLVGVFV) form a helical membrane-spanning segment. At 563-578 (SWKIRIVHIEEFSECT) the chain is on the cytoplasmic side. The chain crosses the membrane as a helical span at residues 579–599 (AIAKTLYSISFCLFVIVPLMI). Topologically, residues 600-608 (SPQDKQSET) are extracellular. Residues 609-629 (IILCVTGIFITTGALLIFFLP) form a helical membrane-spanning segment. At 630–704 (KFWRIFGNEK…NESSLSNETK (75 aa)) the chain is on the cytoplasmic side. Disordered regions lie at residues 657 to 677 (ARAE…SKSS) and 685 to 704 (SGIE…NETK).

This sequence in the N-terminal section; belongs to the BMP lipoprotein family. The protein in the C-terminal section; belongs to the G-protein coupled receptor 3 family. GABA-B receptor subfamily.

The protein localises to the membrane. The chain is Metabotropic glutamate receptor-like protein K (grlK) from Dictyostelium discoideum (Social amoeba).